A 184-amino-acid polypeptide reads, in one-letter code: Large ribosomal subunit protein uL6 (184 aa).

Belongs to the universal ribosomal protein uL6 family. Part of the 50S ribosomal subunit.

This protein binds to the 23S rRNA, and is important in its secondary structure. It is located near the subunit interface in the base of the L7/L12 stalk, and near the tRNA binding site of the peptidyltransferase center. This is Large ribosomal subunit protein uL6 from Mycoplasma pneumoniae (strain ATCC 29342 / M129 / Subtype 1) (Mycoplasmoides pneumoniae).